Reading from the N-terminus, the 253-residue chain is NAD(P)H-quinone oxidoreductase subunit K (253 aa).

[4Fe-4S] cluster-binding residues include Cys68, Cys69, Cys133, and Cys164.

It belongs to the complex I 20 kDa subunit family. In terms of assembly, NDH-1 can be composed of about 15 different subunits; different subcomplexes with different compositions have been identified which probably have different functions. Requires [4Fe-4S] cluster as cofactor.

It is found in the cellular thylakoid membrane. It carries out the reaction a plastoquinone + NADH + (n+1) H(+)(in) = a plastoquinol + NAD(+) + n H(+)(out). The catalysed reaction is a plastoquinone + NADPH + (n+1) H(+)(in) = a plastoquinol + NADP(+) + n H(+)(out). Its function is as follows. NDH-1 shuttles electrons from an unknown electron donor, via FMN and iron-sulfur (Fe-S) centers, to quinones in the respiratory and/or the photosynthetic chain. The immediate electron acceptor for the enzyme in this species is believed to be plastoquinone. Couples the redox reaction to proton translocation, and thus conserves the redox energy in a proton gradient. Cyanobacterial NDH-1 also plays a role in inorganic carbon-concentration. The protein is NAD(P)H-quinone oxidoreductase subunit K of Synechococcus sp. (strain CC9311).